Here is a 142-residue protein sequence, read N- to C-terminus: Neuritin (142 aa).

Positions M1–A27 are cleaved as a signal peptide. G116 is lipidated: GPI-anchor amidated glycine. Residues A117–F142 constitute a propeptide, removed in mature form.

It belongs to the neuritin family. As to quaternary structure, component of the outer core of AMPAR complex. AMPAR complex consists of an inner core made of 4 pore-forming GluA/GRIA proteins (GRIA1, GRIA2, GRIA3 and GRIA4) and 4 major auxiliary subunits arranged in a twofold symmetry. One of the two pairs of distinct binding sites is occupied either by CNIH2, CNIH3 or CACNG2, CACNG3. The other harbors CACNG2, CACNG3, CACNG4, CACNG8 or GSG1L. This inner core of AMPAR complex is complemented by outer core constituents binding directly to the GluA/GRIA proteins at sites distinct from the interaction sites of the inner core constituents. Outer core constituents include at least PRRT1, PRRT2, CKAMP44/SHISA9, FRRS1L and NRN1. The proteins of the inner and outer core serve as a platform for other, more peripherally associated AMPAR constituents. Alone or in combination, these auxiliary subunits control the gating and pharmacology of the AMPAR complex and profoundly impact their biogenesis and protein processing. In terms of tissue distribution, expressed in the brain (at protein level).

The protein resides in the cell membrane. Its subcellular location is the synapse. Functionally, promotes neurite outgrowth and especially branching of neuritic processes in primary hippocampal and cortical cells. This Mus musculus (Mouse) protein is Neuritin (Nrn1).